Reading from the N-terminus, the 77-residue chain is Tachyplesin-1 (77 aa).

The signal sequence occupies residues 1–23; that stretch reads MKKLVIALCLMMVLAVMVEEAEA. 2 disulfide bridges follow: C26–C39 and C30–C35. Position 40 is an arginine amide (R40). A propeptide spanning residues 41-77 is cleaved from the precursor; that stretch reads GKRNEVRQYRDRGYDVRAIPEETFFTRQDEDEDDDEE.

This sequence belongs to the tachyplesin/polyphemusin family. As to expression, hemocytes.

The protein resides in the secreted. Significantly inhibits the growth of Gram-negative and Gram-positive bacteria. This Tachypleus tridentatus (Japanese horseshoe crab) protein is Tachyplesin-1.